We begin with the raw amino-acid sequence, 323 residues long: Phosphoribosylformylglycinamidine cyclo-ligase (323 aa).

This sequence belongs to the AIR synthase family.

It localises to the cytoplasm. The catalysed reaction is 2-formamido-N(1)-(5-O-phospho-beta-D-ribosyl)acetamidine + ATP = 5-amino-1-(5-phospho-beta-D-ribosyl)imidazole + ADP + phosphate + H(+). It functions in the pathway purine metabolism; IMP biosynthesis via de novo pathway; 5-amino-1-(5-phospho-D-ribosyl)imidazole from N(2)-formyl-N(1)-(5-phospho-D-ribosyl)glycinamide: step 2/2. The protein is Phosphoribosylformylglycinamidine cyclo-ligase of Saccharolobus solfataricus (strain ATCC 35092 / DSM 1617 / JCM 11322 / P2) (Sulfolobus solfataricus).